The primary structure comprises 234 residues: DNA repair protein RecO (234 aa).

This sequence belongs to the RecO family.

Involved in DNA repair and RecF pathway recombination. The polypeptide is DNA repair protein RecO (Coxiella burnetii (strain RSA 331 / Henzerling II)).